Consider the following 118-residue polypeptide: Large ribosomal subunit protein bL20 (118 aa).

It belongs to the bacterial ribosomal protein bL20 family.

Its function is as follows. Binds directly to 23S ribosomal RNA and is necessary for the in vitro assembly process of the 50S ribosomal subunit. It is not involved in the protein synthesizing functions of that subunit. The protein is Large ribosomal subunit protein bL20 of Elusimicrobium minutum (strain Pei191).